The chain runs to 302 residues: Large ribosomal subunit protein uL29m (302 aa).

The protein belongs to the universal ribosomal protein uL29 family. Component of the mitochondrial large ribosomal subunit. Mature mitochondrial ribosomes consist of a small (37S) and a large (54S) subunit. The 37S subunit contains at least 33 different proteins and 1 molecule of RNA (15S). The 54S subunit contains at least 45 different proteins and 1 molecule of RNA (21S).

Its subcellular location is the mitochondrion. The chain is Large ribosomal subunit protein uL29m (MRPL4) from Debaryomyces hansenii (strain ATCC 36239 / CBS 767 / BCRC 21394 / JCM 1990 / NBRC 0083 / IGC 2968) (Yeast).